The primary structure comprises 275 residues: Rhamnulose-1-phosphate aldolase (275 aa).

Residue glutamate 117 is part of the active site. Zn(2+) contacts are provided by histidine 141, histidine 143, and histidine 212.

Belongs to the aldolase class II family. RhaD subfamily. As to quaternary structure, homotetramer. It depends on Zn(2+) as a cofactor.

The protein localises to the cytoplasm. The enzyme catalyses L-rhamnulose 1-phosphate = (S)-lactaldehyde + dihydroxyacetone phosphate. The protein operates within carbohydrate degradation; L-rhamnose degradation; glycerone phosphate from L-rhamnose: step 3/3. In terms of biological role, catalyzes the reversible cleavage of L-rhamnulose-1-phosphate to dihydroxyacetone phosphate (DHAP) and L-lactaldehyde. In Salmonella paratyphi B (strain ATCC BAA-1250 / SPB7), this protein is Rhamnulose-1-phosphate aldolase.